Here is a 274-residue protein sequence, read N- to C-terminus: Thiamine kinase (274 aa).

It belongs to the thiamine kinase family.

It carries out the reaction thiamine + ATP = thiamine phosphate + ADP + H(+). Its pathway is cofactor biosynthesis; thiamine diphosphate biosynthesis; thiamine phosphate from thiamine: step 1/1. Catalyzes the ATP-dependent phosphorylation of thiamine to thiamine phosphate. Is involved in thiamine salvage. The sequence is that of Thiamine kinase from Salmonella paratyphi A (strain ATCC 9150 / SARB42).